The sequence spans 51 residues: Insulin (51 aa).

Intrachain disulfides connect Cys7–Cys37, Cys19–Cys50, and Cys36–Cys41.

This sequence belongs to the insulin family. In terms of assembly, heterodimer of a B chain and an A chain linked by two disulfide bonds.

The protein resides in the secreted. In terms of biological role, insulin decreases blood glucose concentration. It increases cell permeability to monosaccharides, amino acids and fatty acids. It accelerates glycolysis, the pentose phosphate cycle, and glycogen synthesis in liver. The chain is Insulin (INS) from Ptyas dhumnades (Big-eyed ratsnake).